A 515-amino-acid polypeptide reads, in one-letter code: Probable malate:quinone oxidoreductase (515 aa).

Belongs to the MQO family. The cofactor is FAD.

It catalyses the reaction (S)-malate + a quinone = a quinol + oxaloacetate. It functions in the pathway carbohydrate metabolism; tricarboxylic acid cycle; oxaloacetate from (S)-malate (quinone route): step 1/1. In Blochmanniella pennsylvanica (strain BPEN), this protein is Probable malate:quinone oxidoreductase.